We begin with the raw amino-acid sequence, 482 residues long: MPDYDNYTTPLSSRYASKEMSATFSLRNRFSTWRKLWLNLAIAEKELGLTVVTDEAIEQMRKHVEITDDEIAKASAQEAIVRHDVMAHVHTFGETCPAAAGIIHLGATSCFVTDNADLIFIRDAYDIIIPKLVNVINRLAKFAMEYKDLPVLGWTHFQPAQLTTLGKRATLWIQELLWDLRNFERARNDIGLRGVKGTTGTQASFLALFHGNHDKVEALDERVTELLGFDKVYPVTGQTYSRKIDIDVLAPLSSFAATAHKMATDIRLLANLKEVEEPFEKSQIGSSAMAYKRNPMRCERVCSLARHLGSLFSDAVQTASVQWFERTLDDSAIRRISLPSAFLTADILLSTLLNISSGLVVYPKVIERRIKGELPFMATENIIMAMVEKNASRQEVHERIRVLSHQAAAVVKEEGGENDLIERVKRDEFFKPIWEELDSLLEPSTFVGRAPQQVEKFVQKDVNNALQPFQKYLNDEQVKLNV.

Substrate-binding positions include 14–15 (RY), 82–84 (RHD), and 108–109 (TS). The Proton donor/acceptor role is filled by His156. Lys196 is covalently cross-linked (Glycyl lysine isopeptide (Lys-Gly) (interchain with G-Cter in ubiquitin)). Gln238 contacts substrate. The active-site Proton donor/acceptor is the Ser286. 4 residues coordinate substrate: Arg300, Arg326, Ser331, and Arg335.

The protein belongs to the lyase 1 family. Adenylosuccinate lyase subfamily. Homotetramer. Residues from neighboring subunits contribute catalytic and substrate-binding residues to each active site.

The catalysed reaction is N(6)-(1,2-dicarboxyethyl)-AMP = fumarate + AMP. The enzyme catalyses (2S)-2-[5-amino-1-(5-phospho-beta-D-ribosyl)imidazole-4-carboxamido]succinate = 5-amino-1-(5-phospho-beta-D-ribosyl)imidazole-4-carboxamide + fumarate. It functions in the pathway purine metabolism; AMP biosynthesis via de novo pathway; AMP from IMP: step 2/2. Its pathway is purine metabolism; IMP biosynthesis via de novo pathway; 5-amino-1-(5-phospho-D-ribosyl)imidazole-4-carboxamide from 5-amino-1-(5-phospho-D-ribosyl)imidazole-4-carboxylate: step 2/2. In Saccharomyces cerevisiae (strain ATCC 204508 / S288c) (Baker's yeast), this protein is Adenylosuccinate lyase (ADE13).